Here is a 168-residue protein sequence, read N- to C-terminus: mRNA stability protein IGO1 (168 aa).

The segment covering 1–13 (MSNENLSPNSSNP) has biased composition (low complexity). Positions 1–31 (MSNENLSPNSSNPDLTKLNNGESGTIDTSKF) are disordered. Positions 17–31 (KLNNGESGTIDTSKF) are enriched in polar residues. Phosphoserine is present on residues serine 32 and serine 64. Positions 125–168 (KEGSISSGPPSSNNGTIGGGSTSSTPVGNHSSSSSSLYTESPIR) are disordered. 2 stretches are compositionally biased toward low complexity: residues 127-139 (GSIS…SNNG) and 146-168 (TSST…SPIR).

Belongs to the endosulfine family. As to quaternary structure, interacts with RIM15, DHH1, PBP1, PBP4 and LSM12. Phosphorylated at Ser-64 by RIM15.

Its function is as follows. Required for TORC1 to properly control gene expression and chronological life span. Plays an essential role in initiation of the G0 program by preventing the degradation of specific nutrient-regulated mRNAs via the 5'-3' mRNA decay pathway. In Saccharomyces cerevisiae (strain ATCC 204508 / S288c) (Baker's yeast), this protein is mRNA stability protein IGO1 (IGO1).